A 445-amino-acid polypeptide reads, in one-letter code: mRNA cleavage and polyadenylation factor CLP1 (445 aa).

ATP contacts are provided by residues D33, K72, and 133-138 (QTGKTS).

This sequence belongs to the Clp1 family. Clp1 subfamily. Component of the cleavage factor IA (CF IA) complex, which is a heterohexameric complex with 2:2:1:1 stoichiometry of RNA14, RNA15, PCF11 and CLP1. It contains 2 copies of an RNA14-RNA15 dimer and 1 copy of CLP1-PCF11. The complex interacts with the cleavage factor HRB1/CF IB to form the cleavage factor I (CF I) complex, and binds to RNA. Interacts directly with PCF11. Interacts with the CPF components CFT1, PTA1, PFS2, YSH1 and SSU72.

Its subcellular location is the nucleus. Component of the cleavage factor IA (CF IA) complex, which is involved in the endonucleolytic cleavage during polyadenylation-dependent pre-mRNA 3'-end formation. Associates with HRB1/CF IB to form the cleavage factor I (CF I) complex. CF I is required for correct positioning of a larger protein complex, the cleavage and polyadenylation factor (CPF) complex, which contains the catalytic subunits executing mRNA cleavage and polyadenylation. CLP1 mediates interactions between CF IA and CPF factors. CLP1 is also involved in maintaining the CF IA interaction with the C-terminal domain of RNA Pol II largest subunit via PCF11, which links pre-mRNA 3'-end processing to transcription termination. This Saccharomyces cerevisiae (strain YJM789) (Baker's yeast) protein is mRNA cleavage and polyadenylation factor CLP1.